Consider the following 771-residue polypeptide: Polymeric immunoglobulin receptor (771 aa).

Residues 1–18 form the signal peptide; it reads MRLYLFTLLVTVFSGVST. The Extracellular segment spans residues 19 to 645; sequence KSPIFGPQEV…DGQSRSSSSK (627 aa). The Ig-like V-type 1; required for binding to polymeric IgA and IgM domain maps to 21-120; it reads PIFGPQEVSS…GLGTSNRGLS (100 aa). A disulfide bond links cysteine 40 and cysteine 110. Residues asparagine 90, asparagine 147, asparagine 170, and asparagine 206 are each glycosylated (N-linked (GlcNAc...) asparagine). Ig-like V-type domains are found at residues 135–237, 245–351, 352–457, and 463–563; these read SDTH…DLQV, LYKD…ESTI, PNRR…LQVA, and PNLE…IYIA. 3 disulfide bridges follow: cysteine 152-cysteine 220, cysteine 257-cysteine 324, and cysteine 370-cysteine 440. Asparagine 420 and asparagine 471 each carry an N-linked (GlcNAc...) asparagine glycan. Cysteine 484 and cysteine 546 are oxidised to a cystine. The disordered stretch occupies residues 622–641; the sequence is QAQENRASGDAGSADGQSRS. Residues 627-641 show a composition bias toward low complexity; it reads RASGDAGSADGQSRS. The chain crosses the membrane as a helical span at residues 646–668; it reads VLFSTLVPLGLVLAVGAIAVWVA. The Cytoplasmic portion of the chain corresponds to 669–771; the sequence is RVRHRKNVDR…AQVHDGPQEA (103 aa). 4 positions are modified to phosphoserine: serine 680, serine 689, serine 696, and serine 742.

In terms of assembly, interacts (mainly via CDR1-like domain) with dimeric IgA. Interacts (mainly via CDR2-like domain) with pentameric IgM. As to quaternary structure, either free or part of the secretory IgA (sIgA) complex that consists of two, four or five IgA monomers, and two additional non-Ig polypeptides, namely the JCHAIN and the secretory component (the proteolytic product of PIGR). Free secretory component interacts with bacterial antigens toxA of C.difficile and eae of E.coli. In terms of processing, N-glycosylated. N-glycosylation is required for anchoring IgA molecules to mucus, but is not necessary for Ig binding.

Its subcellular location is the cell membrane. It is found in the secreted. In terms of biological role, mediates selective transcytosis of polymeric IgA and IgM across mucosal epithelial cells. Binds polymeric IgA and IgM at the basolateral surface of epithelial cells. The complex is then transported across the cell to be secreted at the apical surface. During this process, a cleavage occurs that separates the extracellular (known as the secretory component) from the transmembrane segment. Through its N-linked glycans ensures anchoring of secretory IgA (sIgA) molecules to mucus lining the epithelial surface to neutralize extracellular pathogens. On its own (free form) may act as a non-specific microbial scavenger to prevent pathogen interaction with epithelial cells. The chain is Polymeric immunoglobulin receptor (Pigr) from Mus musculus (Mouse).